The sequence spans 892 residues: Translation initiation factor IF-2 (892 aa).

Composition is skewed to basic and acidic residues over residues 93-159 (VKRD…KDKV) and 166-216 (DMTK…EENK). The segment at 93–304 (VKRDPQEAER…SSLQQGFQKP (212 aa)) is disordered. Basic residues predominate over residues 254-269 (GRGRNAKAARPAKKGK). A compositionally biased stretch (basic and acidic residues) spans 270-282 (HAESKADREEARA). A tr-type G domain is found at 391 to 560 (PRAPVVTIMG…LLQAEVLELK (170 aa)). The tract at residues 400 to 407 (GHVDHGKT) is G1. 400-407 (GHVDHGKT) serves as a coordination point for GTP. The interval 425–429 (GITQH) is G2. A G3 region spans residues 446-449 (DTPG). GTP-binding positions include 446 to 450 (DTPGH) and 500 to 503 (NKID). A G4 region spans residues 500–503 (NKID). Residues 536 to 538 (SAK) form a G5 region.

This sequence belongs to the TRAFAC class translation factor GTPase superfamily. Classic translation factor GTPase family. IF-2 subfamily.

Its subcellular location is the cytoplasm. In terms of biological role, one of the essential components for the initiation of protein synthesis. Protects formylmethionyl-tRNA from spontaneous hydrolysis and promotes its binding to the 30S ribosomal subunits. Also involved in the hydrolysis of GTP during the formation of the 70S ribosomal complex. This Salmonella gallinarum (strain 287/91 / NCTC 13346) protein is Translation initiation factor IF-2.